The following is a 141-amino-acid chain: Nucleoside diphosphate kinase (141 aa).

ATP is bound by residues lysine 11, phenylalanine 59, arginine 87, threonine 93, arginine 104, and asparagine 114. The active-site Pros-phosphohistidine intermediate is the histidine 117.

Belongs to the NDK family. As to quaternary structure, homotetramer. The cofactor is Mg(2+).

Its subcellular location is the cytoplasm. It carries out the reaction a 2'-deoxyribonucleoside 5'-diphosphate + ATP = a 2'-deoxyribonucleoside 5'-triphosphate + ADP. The catalysed reaction is a ribonucleoside 5'-diphosphate + ATP = a ribonucleoside 5'-triphosphate + ADP. Major role in the synthesis of nucleoside triphosphates other than ATP. The ATP gamma phosphate is transferred to the NDP beta phosphate via a ping-pong mechanism, using a phosphorylated active-site intermediate. In Acidithiobacillus ferrooxidans (strain ATCC 53993 / BNL-5-31) (Leptospirillum ferrooxidans (ATCC 53993)), this protein is Nucleoside diphosphate kinase.